Reading from the N-terminus, the 259-residue chain is Insulin-induced gene 1 protein (259 aa).

The Cytoplasmic portion of the chain corresponds to 1–66; it reads MPRLHDHVWN…ARPGSWHHDL (66 aa). Positions 36–55 are disordered; it reads PGVPEPEHAPRGQRAGTTGC. Residues 67 to 89 traverse the membrane as a helical segment; sequence VQRSLVLFSFGVVLALVLNLLQI. Residues 90 to 108 are Extracellular-facing; sequence QRNVTLFPDEVIATIFSSA. The chain crosses the membrane as a helical span at residues 109 to 126; sequence WWVPPCCGTAAAVVGLLY. Residues 127 to 141 are Cytoplasmic-facing; that stretch reads PCIDSHLGEPHKFKR. Glycyl lysine isopeptide (Lys-Gly) (interchain with G-Cter in ubiquitin) cross-links involve residues K138 and K140. A helical transmembrane segment spans residues 142 to 164; it reads EWASVMRCIAVFVGINHASAKLD. The Extracellular portion of the chain corresponds to 165-167; it reads FAN. Residues 168 to 186 traverse the membrane as a helical segment; the sequence is NVQLSLTLAALSLGLWWTF. The Cytoplasmic segment spans residues 187-191; sequence DRSRS. A Phosphoserine modification is found at S189. Residues 192–213 traverse the membrane as a helical segment; the sequence is GLGLGITIAFLATLITQFLVYN. Residues 214–227 lie on the Extracellular side of the membrane; that stretch reads GVYQYTSPDFLYIR. A helical transmembrane segment spans residues 228-245; the sequence is SWLPCIFFSGGVTVGNIG. Topologically, residues 246-259 are cytoplasmic; sequence RQLAMGVPEKPHSD. The KxHxx motif lies at 253-259; the sequence is PEKPHSD.

It belongs to the INSIG family. As to quaternary structure, interacts with SCAP; interaction is direct and only takes place in the presence of sterols; it prevents interaction between SCAP and the coat protein complex II (COPII). Associates with the SCAP-SREBP complex (composed of SCAP and SREBF1/SREBP1 or SREBF2/SREBP2); association is mediated via its interaction with SCAP and only takes place in the presence of sterols. Interaction with SCAP is mutually exclusive with PAQR3. Interacts with HMGCR (via its SSD); the interaction, accelerated by sterols, leads to the recruitment of HMGCR to AMFR/gp78 for its ubiquitination by the sterol-mediated ERAD pathway. Interacts with AMFR/gp78 (via its membrane domain); the interaction recruits HMCR at the ER membrane for its ubiquitination and degradation by the sterol-mediated ERAD pathway. Interacts with SOAT2/ACAT2; leading to promote recruitment of AMFR/gp78 and subsequent ubiquitination of SOAT2/ACAT2. Interacts with RNF139. Interacts with RNF145. Phosphorylation at Ser-189 by PCK1 reduces binding to oxysterol, disrupting the interaction between INSIG1 and SCAP, thereby promoting nuclear translocation of SREBP proteins (SREBF1/SREBP1 or SREBF2/SREBP2) and subsequent transcription of downstream lipogenesis-related genes. Post-translationally, ubiquitinated by AMFR/gp78 in response to sterol deprivation, leading to its degradation: when the SCAP-SREBP complex becomes dissociated from INSIG1, INSIG1 is then ubiquitinated and degraded in proteasomes. Although ubiquitination is required for rapid INSIG1 degradation, it is not required for release of the SCAP-SREBP complex. Ubiquitinated by RNF139.

The protein resides in the endoplasmic reticulum membrane. Functionally, oxysterol-binding protein that mediates feedback control of cholesterol synthesis by controlling both endoplasmic reticulum to Golgi transport of SCAP and degradation of HMGCR. Acts as a negative regulator of cholesterol biosynthesis by mediating the retention of the SCAP-SREBP complex in the endoplasmic reticulum, thereby blocking the processing of sterol regulatory element-binding proteins (SREBPs) SREBF1/SREBP1 and SREBF2/SREBP2. Binds oxysterol, including 25-hydroxycholesterol, regulating interaction with SCAP and retention of the SCAP-SREBP complex in the endoplasmic reticulum. In presence of oxysterol, interacts with SCAP, retaining the SCAP-SREBP complex in the endoplasmic reticulum, thereby preventing SCAP from escorting SREBF1/SREBP1 and SREBF2/SREBP2 to the Golgi. Sterol deprivation or phosphorylation by PCK1 reduce oxysterol-binding, disrupting the interaction between INSIG1 and SCAP, thereby promoting Golgi transport of the SCAP-SREBP complex, followed by processing and nuclear translocation of SREBF1/SREBP1 and SREBF2/SREBP2. Also regulates cholesterol synthesis by regulating degradation of HMGCR: initiates the sterol-mediated ubiquitin-mediated endoplasmic reticulum-associated degradation (ERAD) of HMGCR via recruitment of the reductase to the ubiquitin ligases AMFR/gp78 and/or RNF139. Also regulates degradation of SOAT2/ACAT2 when the lipid levels are low: initiates the ubiquitin-mediated degradation of SOAT2/ACAT2 via recruitment of the ubiquitin ligases AMFR/gp78. The sequence is that of Insulin-induced gene 1 protein from Mus musculus (Mouse).